We begin with the raw amino-acid sequence, 287 residues long: Prohibitin-1 (287 aa).

The segment at 102–116 (VLQLPAIYQNLGLDY) is interaction with ATG8. The short motif at 109–112 (YQNL) is the AIM element. A coiled-coil region spans residues 180–224 (EFTKAVEQKQIAQQDAERAKFLVEKAEQERQASVIRAEGEAESAE). Residues 264–287 (SQHSGGGNSESSGSPNSLLLNIGR) form a disordered region. Residues 272–287 (SESSGSPNSLLLNIGR) show a composition bias toward low complexity.

It belongs to the prohibitin family. The mitochondrial prohibitin complex consists of two subunits (PHB1 and PHB2). The subunits assemble into a membrane-associated ring-shaped supercomplex of approximately 1 mDa. The mitochondrial prohibitin complex interacts with the m-AAA protease, a heterohexamer composed of YTA12/RCA1 and YTA10/AFG3. The mitochondrial prohibitin complex interacts with ATG8 and the interaction may support mitophagosome assembly. The N-terminus is blocked.

It is found in the mitochondrion inner membrane. Its function is as follows. Prohibitin probably acts as a holdase/unfoldase for the stabilization of newly synthesized mitochondrial proteins. Involved in mitophagy; may act as an adapter for ATG8 that supports mitophagosome assembly. Negatively regulates the proteolytic processing of ATG32 via the i-AAA protease. Acts as a negative regulator of the m-AAA protease. In Saccharomyces cerevisiae (strain ATCC 204508 / S288c) (Baker's yeast), this protein is Prohibitin-1 (PHB1).